Consider the following 385-residue polypeptide: Glucans biosynthesis protein C (385 aa).

10 consecutive transmembrane segments (helical) span residues 17–37, 60–80, 91–111, 137–157, 173–193, 212–232, 245–262, 274–294, 311–331, and 338–358; these read AWLM…SHTW, MQVF…RYPL, VGIP…IMLQ, ISHL…VWIF, KFSM…YAVI, FIVM…LAFI, RGST…LLNQ, TESV…FSFG, ASLF…AYIT, and WLGF…LYEI.

Belongs to the acyltransferase 3 family. OpgC subfamily.

It is found in the cell membrane. The protein operates within glycan metabolism; osmoregulated periplasmic glucan (OPG) biosynthesis. Necessary for the succinyl substitution of periplasmic glucans. Could catalyze the transfer of succinyl residues from the cytoplasmic side of the membrane to the nascent glucan backbones on the periplasmic side of the membrane. This Escherichia coli O81 (strain ED1a) protein is Glucans biosynthesis protein C.